Consider the following 469-residue polypeptide: Probable indole-3-acetic acid-amido synthetase GH3.13 (469 aa).

Residues methionine 1–alanine 26 form a disordered region. Over residues alanine 9–alanine 18 the composition is skewed to basic and acidic residues.

This sequence belongs to the IAA-amido conjugating enzyme family.

Its function is as follows. May catalyze the synthesis of indole-3-acetic acid (IAA)-amino acid conjugates, providing a mechanism for the plant to cope with the presence of excess auxin. This is Probable indole-3-acetic acid-amido synthetase GH3.13 (GH3.13) from Oryza sativa subsp. japonica (Rice).